A 515-amino-acid chain; its full sequence is 2-isopropylmalate synthase (515 aa).

In terms of domain architecture, Pyruvate carboxyltransferase spans 5 to 267 (VIIFDTTLRD…DTRINTQEIH (263 aa)). Positions 14, 202, 204, and 238 each coordinate Mn(2+). The segment at 392 to 515 (VLDKLSAHST…VADIKNHKHH (124 aa)) is regulatory domain.

The protein belongs to the alpha-IPM synthase/homocitrate synthase family. LeuA type 1 subfamily. In terms of assembly, homodimer. Mn(2+) is required as a cofactor.

It localises to the cytoplasm. The catalysed reaction is 3-methyl-2-oxobutanoate + acetyl-CoA + H2O = (2S)-2-isopropylmalate + CoA + H(+). Its pathway is amino-acid biosynthesis; L-leucine biosynthesis; L-leucine from 3-methyl-2-oxobutanoate: step 1/4. Functionally, catalyzes the condensation of the acetyl group of acetyl-CoA with 3-methyl-2-oxobutanoate (2-ketoisovalerate) to form 3-carboxy-3-hydroxy-4-methylpentanoate (2-isopropylmalate). The protein is 2-isopropylmalate synthase of Haemophilus influenzae (strain PittEE).